A 307-amino-acid polypeptide reads, in one-letter code: Methionyl-tRNA formyltransferase (307 aa).

108-111 (SLLP) is a (6S)-5,6,7,8-tetrahydrofolate binding site.

Belongs to the Fmt family.

It carries out the reaction L-methionyl-tRNA(fMet) + (6R)-10-formyltetrahydrofolate = N-formyl-L-methionyl-tRNA(fMet) + (6S)-5,6,7,8-tetrahydrofolate + H(+). Its function is as follows. Attaches a formyl group to the free amino group of methionyl-tRNA(fMet). The formyl group appears to play a dual role in the initiator identity of N-formylmethionyl-tRNA by promoting its recognition by IF2 and preventing the misappropriation of this tRNA by the elongation apparatus. The polypeptide is Methionyl-tRNA formyltransferase (Xanthomonas oryzae pv. oryzae (strain MAFF 311018)).